A 233-amino-acid polypeptide reads, in one-letter code: Small ribosomal subunit protein uS2c (233 aa).

It belongs to the universal ribosomal protein uS2 family.

The protein localises to the plastid. It localises to the apicoplast. This is Small ribosomal subunit protein uS2c from Toxoplasma gondii.